The following is a 357-amino-acid chain: Probable butyrate kinase 1 (357 aa).

This sequence belongs to the acetokinase family.

The protein localises to the cytoplasm. The catalysed reaction is butanoate + ATP = butanoyl phosphate + ADP. The sequence is that of Probable butyrate kinase 1 from Caldanaerobacter subterraneus subsp. tengcongensis (strain DSM 15242 / JCM 11007 / NBRC 100824 / MB4) (Thermoanaerobacter tengcongensis).